We begin with the raw amino-acid sequence, 150 residues long: MVRLALVVAEFNYDITSLMLQKAIEHARFLGAEVTYVVKVPGVYDIPMVLKDVVAKSDVDAVATLGAVIQGATKHDELVAQQAARKILDIAVEVDKPITLGIIGHGANRMQALERVEEYARRAVEAAVKLARRKKLLKDAKYSGATVYVE.

Residues F11, 43 to 45 (VYD), and 67 to 69 (AVI) each bind 5-amino-6-(D-ribitylamino)uracil. 72-73 (AT) contributes to the (2S)-2-hydroxy-3-oxobutyl phosphate binding site. Catalysis depends on H75, which acts as the Proton donor. Position 100 (L100) interacts with 5-amino-6-(D-ribitylamino)uracil. R115 is a (2S)-2-hydroxy-3-oxobutyl phosphate binding site.

The protein belongs to the DMRL synthase family.

The enzyme catalyses (2S)-2-hydroxy-3-oxobutyl phosphate + 5-amino-6-(D-ribitylamino)uracil = 6,7-dimethyl-8-(1-D-ribityl)lumazine + phosphate + 2 H2O + H(+). It functions in the pathway cofactor biosynthesis; riboflavin biosynthesis; riboflavin from 2-hydroxy-3-oxobutyl phosphate and 5-amino-6-(D-ribitylamino)uracil: step 1/2. Its function is as follows. Catalyzes the formation of 6,7-dimethyl-8-ribityllumazine by condensation of 5-amino-6-(D-ribitylamino)uracil with 3,4-dihydroxy-2-butanone 4-phosphate. This is the penultimate step in the biosynthesis of riboflavin. The chain is 6,7-dimethyl-8-ribityllumazine synthase from Pyrobaculum neutrophilum (strain DSM 2338 / JCM 9278 / NBRC 100436 / V24Sta) (Thermoproteus neutrophilus).